The primary structure comprises 224 residues: MNKQASGKDTGNRGAVTGGKQMDGFADMLTNLLSKVGISNHEVFTSEKPHLPGYFRATKKWDFLVVKTNDRGEKYLLAAVELKSHVGPSFGNNLNNRVEESLGSATDIWIAFREKAFKNSRAPWLGYLMLLEDCPQSTKPVKVDEPHFEVFPEFKNASYAKRYELFCRKIVLERKYTSSCLLMSDKQGGLQGIYKEPANDLKIYPFLYSLLTHVATEAALISSS.

It belongs to the XhoI type II restriction endonuclease family.

It carries out the reaction Endonucleolytic cleavage of DNA to give specific double-stranded fragments with terminal 5'-phosphates.. A P subtype restriction enzyme that recognizes the double-stranded sequence 5'-CTCGAG-3' and cleaves after C-1. In Geobacillus stearothermophilus (Bacillus stearothermophilus), this protein is Type II restriction enzyme BstVI.